Reading from the N-terminus, the 436-residue chain is Small ribosomal subunit protein uS5m (436 aa).

The 67-residue stretch at 152-218 (FETYCLEVKR…GMASRKLFHV (67 aa)) folds into the S5 DRBM domain. Residues 417 to 436 (GVEPMPLGIGLSHVVPKKDD) form a disordered region.

This sequence belongs to the universal ribosomal protein uS5 family. In terms of assembly, component of the mitochondrial ribosome small subunit (28S) which comprises a 12S rRNA and about 30 distinct proteins.

It is found in the mitochondrion. The protein is Small ribosomal subunit protein uS5m (mrps-5) of Caenorhabditis elegans.